Reading from the N-terminus, the 264-residue chain is Heavy metal-associated isoprenylated plant protein 17 (264 aa).

2 HMA domains span residues 32–95 (VTDA…KKIE) and 133–204 (IMEV…KERQ). The stretch at 185–218 (SRKLNKKMHQKIKKAEKERQEWESEMMLREAEEE) forms a coiled coil. Cys261 carries the cysteine methyl ester modification. Cys261 carries the S-farnesyl cysteine lipid modification. The propeptide at 262-264 (SIS) is removed in mature form.

The protein belongs to the HIPP family.

Probable heavy-metal-binding protein. The polypeptide is Heavy metal-associated isoprenylated plant protein 17 (Arabidopsis thaliana (Mouse-ear cress)).